A 149-amino-acid polypeptide reads, in one-letter code: Large ribosomal subunit protein bL9 (149 aa).

It belongs to the bacterial ribosomal protein bL9 family.

Functionally, binds to the 23S rRNA. The polypeptide is Large ribosomal subunit protein bL9 (Legionella pneumophila subsp. pneumophila (strain Philadelphia 1 / ATCC 33152 / DSM 7513)).